A 117-amino-acid polypeptide reads, in one-letter code: Large ribosomal subunit protein uL18 (117 aa).

It belongs to the universal ribosomal protein uL18 family. As to quaternary structure, part of the 50S ribosomal subunit; part of the 5S rRNA/L5/L18/L25 subcomplex. Contacts the 5S and 23S rRNAs.

Functionally, this is one of the proteins that bind and probably mediate the attachment of the 5S RNA into the large ribosomal subunit, where it forms part of the central protuberance. This is Large ribosomal subunit protein uL18 from Photobacterium profundum (strain SS9).